We begin with the raw amino-acid sequence, 223 residues long: DNA mismatch repair protein MutH (223 aa).

It belongs to the MutH family.

The protein resides in the cytoplasm. Sequence-specific endonuclease that cleaves unmethylated GATC sequences. It is involved in DNA mismatch repair. The protein is DNA mismatch repair protein MutH of Shewanella oneidensis (strain ATCC 700550 / JCM 31522 / CIP 106686 / LMG 19005 / NCIMB 14063 / MR-1).